A 183-amino-acid polypeptide reads, in one-letter code: MPIDTVMETLPGYAKDIKLNYSTLVRQNTELTPQQLWGTVVASAIATRNDTLTAAALEDGAQHLSEQALEAARIAAALMSMNNIFYRFQHLSSNEKYATMPARLRMNGMRTHGVEPVDFELWSLAVSAINGCGKCVDSHEKVLREKGAGEDLVLAAVRVASVIHAIGAVLDAEKVHQPEAAMA.

The active-site Proton donor is the Cys-132. Cys-132 and Cys-135 are joined by a disulfide. Cys-135 acts as the Cysteine sulfenic acid (-SOH) intermediate in catalysis.

This sequence belongs to the AhpD family.

The catalysed reaction is N(6)-[(R)-dihydrolipoyl]-L-lysyl-[lipoyl-carrier protein] + a hydroperoxide = N(6)-[(R)-lipoyl]-L-lysyl-[lipoyl-carrier protein] + an alcohol + H2O. Its function is as follows. Antioxidant protein with alkyl hydroperoxidase activity. Required for the reduction of the AhpC active site cysteine residues and for the regeneration of the AhpC enzyme activity. In Acidobacterium capsulatum (strain ATCC 51196 / DSM 11244 / BCRC 80197 / JCM 7670 / NBRC 15755 / NCIMB 13165 / 161), this protein is Alkyl hydroperoxide reductase AhpD.